The following is a 200-amino-acid chain: Recombination protein RecR (200 aa).

A C4-type zinc finger spans residues 57–72; it reads CRQCRTLTEQELCPQC. Residues 80 to 175 form the Toprim domain; it reads TQLCVVEGPT…VASRIAHGVP (96 aa).

Belongs to the RecR family.

Its function is as follows. May play a role in DNA repair. It seems to be involved in an RecBC-independent recombinational process of DNA repair. It may act with RecF and RecO. In Pseudomonas putida (strain ATCC 700007 / DSM 6899 / JCM 31910 / BCRC 17059 / LMG 24140 / F1), this protein is Recombination protein RecR.